A 94-amino-acid chain; its full sequence is Acylphosphatase (94 aa).

Residues 5 to 94 (RLTAFVHGHV…PRDVEGFVER (90 aa)) enclose the Acylphosphatase-like domain. Active-site residues include Arg20 and Asn38.

Belongs to the acylphosphatase family.

It catalyses the reaction an acyl phosphate + H2O = a carboxylate + phosphate + H(+). This chain is Acylphosphatase (acyP), found in Corynebacterium glutamicum (strain R).